The following is a 313-amino-acid chain: 4-diphosphocytidyl-2-C-methyl-D-erythritol kinase (313 aa).

Residue lysine 10 is part of the active site. Position 95–105 (95–105 (PVTAGLGGGSS)) interacts with ATP. Residue aspartate 136 is part of the active site. The disordered stretch occupies residues 289 to 313 (HPRVSPWRSPRSASSPSTRRSSRPT). The segment covering 292-307 (VSPWRSPRSASSPSTR) has biased composition (low complexity).

This sequence belongs to the GHMP kinase family. IspE subfamily.

The enzyme catalyses 4-CDP-2-C-methyl-D-erythritol + ATP = 4-CDP-2-C-methyl-D-erythritol 2-phosphate + ADP + H(+). It functions in the pathway isoprenoid biosynthesis; isopentenyl diphosphate biosynthesis via DXP pathway; isopentenyl diphosphate from 1-deoxy-D-xylulose 5-phosphate: step 3/6. In terms of biological role, catalyzes the phosphorylation of the position 2 hydroxy group of 4-diphosphocytidyl-2C-methyl-D-erythritol. This is 4-diphosphocytidyl-2-C-methyl-D-erythritol kinase from Anaeromyxobacter dehalogenans (strain 2CP-C).